Consider the following 589-residue polypeptide: Progranulin (589 aa).

A signal peptide spans 1–17 (MWVLMSWLAFAAGLVAG). An N-linked (GlcNAc...) asparagine glycan is attached at asparagine 38. 2 disulfides stabilise this stretch: cysteine 125-cysteine 138 and cysteine 132-cysteine 148. An N-linked (GlcNAc...) asparagine glycan is attached at asparagine 263. 10 disulfides stabilise this stretch: cysteine 282–cysteine 294, cysteine 288–cysteine 304, cysteine 295–cysteine 312, cysteine 305–cysteine 319, cysteine 313–cysteine 326, cysteine 320–cysteine 333, cysteine 364–cysteine 376, cysteine 370–cysteine 386, cysteine 395–cysteine 408, and cysteine 402–cysteine 414. Residue asparagine 373 is glycosylated (N-linked (GlcNAc...) asparagine). N-linked (GlcNAc...) asparagine glycosylation occurs at asparagine 526.

This sequence belongs to the granulin family. In terms of assembly, progranulin is secreted as a homodimer. Interacts with SLPI; interaction protects progranulin from proteolysis. Interacts (via region corresponding to granulin-7 peptide) with CTSD; stabilizes CTSD and increases its proteolytic activity. Interacts (via region corresponding to granulin-7 peptide) with SORT1; this interaction mediates endocytosis and lysosome delivery of progranulin; interaction occurs at the neuronal cell surface in a stressed nervous system. Interacts with PSAP; facilitates lysosomal delivery of progranulin from the extracellular space and the biosynthetic pathway. Forms a complex with PSAP and M6PR; PSAP bridges the binding between progranulin and M6PR. Forms a complex with PSAP and SORT1; progranulin bridges the interaction between PSAP and SORT1; facilitates lysosomal targeting of PSAP via SORT1; interaction enhances PSAP uptake in primary cortical neurons. Interacts (via regions corresponding to granulin-2 and granulin-7 peptides) with GBA1; this interaction prevents aggregation of GBA1-SCARB2 complex via interaction with HSPA1A upon stress. Interacts (via region corresponding to granulin-7 peptide) with HSPA1A; mediates recruitment of HSPA1A to GBA1 and prevents GBA1 aggregation in response to stress. N-glycosylated. Post-translationally, cleaved by ELANE; proteolysis is blocked by SLPI and is concentration- and time-dependent and induces CXCL8/IL-8 production; granulin-3 and granulin-4 are resistant to ELANE. Cleaved by CTSL in lysosome thus regulating the maturation and turnover of progranulin within the lysosome. Highly expressed at the wound site and diminishes away from the wound. Not expressed in fibroblasts and endothelial cells in intact skin. In adult brain, expressed primarily in neurons and in resting and reactive microglia. Expressed in both neurons and microglia. Highly expressed in activated microglia in response to injury. Expressed in macrophage.

It is found in the secreted. Its subcellular location is the lysosome. Its function is as follows. Secreted protein that acts as a key regulator of lysosomal function and as a growth factor involved in inflammation, wound healing and cell proliferation. Regulates protein trafficking to lysosomes, and also the activity of lysosomal enzymes. Also facilitates the acidification of lysosomes, causing degradation of mature CTSD by CTSB. In addition, functions as a wound-related growth factor that acts directly on dermal fibroblasts and endothelial cells to promote division, migration and the formation of capillary-like tubule structures. Also promotes epithelial cell proliferation by blocking TNF-mediated neutrophil activation preventing release of oxidants and proteases. Moreover, modulates inflammation in neurons by preserving neurons survival, axonal outgrowth and neuronal integrity. Inhibits epithelial cell proliferation and induces epithelial cells to secrete IL-8. In terms of biological role, stabilizes CTSD through interaction with CTSD leading to maintain its aspartic-type peptidase activity. The chain is Progranulin (Grn) from Mus musculus (Mouse).